The primary structure comprises 373 residues: Flagellar P-ring protein (373 aa).

An N-terminal signal peptide occupies residues methionine 1 to alanine 26.

This sequence belongs to the FlgI family. In terms of assembly, the basal body constitutes a major portion of the flagellar organelle and consists of four rings (L,P,S, and M) mounted on a central rod.

It is found in the periplasm. The protein resides in the bacterial flagellum basal body. In terms of biological role, assembles around the rod to form the L-ring and probably protects the motor/basal body from shearing forces during rotation. The sequence is that of Flagellar P-ring protein from Rhizobium leguminosarum bv. trifolii (strain WSM2304).